Here is an 87-residue protein sequence, read N- to C-terminus: Ragulator complex protein LAMTOR4 homolog (87 aa).

Belongs to the LAMTOR4 family. As to quaternary structure, part of the Ragulator complex.

Its subcellular location is the lysosome. In terms of biological role, regulator of the TOR pathway, a signaling cascade that promotes cell growth in response to growth factors, energy levels, and amino acids. As part of the Ragulator complex, may activate the TOR signaling cascade in response to amino acids. In Dictyostelium discoideum (Social amoeba), this protein is Ragulator complex protein LAMTOR4 homolog.